The following is a 73-amino-acid chain: Large ribosomal subunit protein bL31 (73 aa).

Zn(2+) is bound by residues C16, C18, C37, and C40.

The protein belongs to the bacterial ribosomal protein bL31 family. Type A subfamily. Part of the 50S ribosomal subunit. The cofactor is Zn(2+).

In terms of biological role, binds the 23S rRNA. This chain is Large ribosomal subunit protein bL31, found in Pseudomonas syringae pv. syringae (strain B728a).